Consider the following 339-residue polypeptide: Ketol-acid reductoisomerase (NADP(+)) (339 aa).

The 182-residue stretch at 1 to 182 (MRVYYDRDAD…GGGRAGIIET (182 aa)) folds into the KARI N-terminal Rossmann domain. NADP(+) is bound by residues 24–27 (YGSQ), arginine 48, serine 51, threonine 53, and 83–86 (DELQ). Histidine 108 is a catalytic residue. Glycine 134 contributes to the NADP(+) binding site. The KARI C-terminal knotted domain maps to 183–328 (SFKEECETDL…AKLRDMMPWI (146 aa)). Positions 191, 195, 227, and 231 each coordinate Mg(2+). Residue serine 252 coordinates substrate.

Belongs to the ketol-acid reductoisomerase family. The cofactor is Mg(2+).

It carries out the reaction (2R)-2,3-dihydroxy-3-methylbutanoate + NADP(+) = (2S)-2-acetolactate + NADPH + H(+). The catalysed reaction is (2R,3R)-2,3-dihydroxy-3-methylpentanoate + NADP(+) = (S)-2-ethyl-2-hydroxy-3-oxobutanoate + NADPH + H(+). The protein operates within amino-acid biosynthesis; L-isoleucine biosynthesis; L-isoleucine from 2-oxobutanoate: step 2/4. It participates in amino-acid biosynthesis; L-valine biosynthesis; L-valine from pyruvate: step 2/4. Involved in the biosynthesis of branched-chain amino acids (BCAA). Catalyzes an alkyl-migration followed by a ketol-acid reduction of (S)-2-acetolactate (S2AL) to yield (R)-2,3-dihydroxy-isovalerate. In the isomerase reaction, S2AL is rearranged via a Mg-dependent methyl migration to produce 3-hydroxy-3-methyl-2-ketobutyrate (HMKB). In the reductase reaction, this 2-ketoacid undergoes a metal-dependent reduction by NADPH to yield (R)-2,3-dihydroxy-isovalerate. The polypeptide is Ketol-acid reductoisomerase (NADP(+)) (Rhodopseudomonas palustris (strain HaA2)).